The sequence spans 396 residues: Enoyl-[acyl-carrier-protein] reductase [NADH] (396 aa).

NAD(+) contacts are provided by residues 47–52 (GASTGF), 73–74 (FE), 110–111 (DA), and 138–139 (LA). Position 224 (Tyr-224) interacts with substrate. The active-site Proton donor is the Tyr-234. NAD(+)-binding positions include Lys-243 and 272 to 274 (LVT).

It belongs to the TER reductase family. In terms of assembly, monomer.

It catalyses the reaction a 2,3-saturated acyl-[ACP] + NAD(+) = a (2E)-enoyl-[ACP] + NADH + H(+). It functions in the pathway lipid metabolism; fatty acid biosynthesis. In terms of biological role, involved in the final reduction of the elongation cycle of fatty acid synthesis (FAS II). Catalyzes the reduction of a carbon-carbon double bond in an enoyl moiety that is covalently linked to an acyl carrier protein (ACP). This is Enoyl-[acyl-carrier-protein] reductase [NADH] from Flavobacterium psychrophilum (strain ATCC 49511 / DSM 21280 / CIP 103535 / JIP02/86).